The chain runs to 476 residues: Nyctalopin (476 aa).

An N-terminal signal peptide occupies residues 1–18 (MLVLLLHAVVLGLPSAWA). LRR repeat units lie at residues 60-84 (VSID…PSLR), 85-108 (RLSL…PRLA), 110-133 (LRLA…SRLR), 134-157 (RLDL…PALR), 159-181 (LAAF…NLTH), 182-204 (AHLE…RRLR), 205-228 (SLSL…GVLE), 229-252 (HLLL…RRLR), 254-276 (LNLG…AELE), 277-300 (LLYL…SGLL), and 302-324 (LHLN…FFLG). Asn-92 is a glycosylation site (N-linked (GlcNAc...) asparagine). Asn-178 carries an N-linked (GlcNAc...) asparagine glycan. An N-linked (GlcNAc...) asparagine glycan is attached at Asn-295. An LRRCT domain is found at 336–387 (DCRLEWLRDWMEGSGRVTDVPCASPGSVAGLDLSQVTFGRSSDGLCVDPEEL). Asn-388, Asn-427, and Asn-434 each carry an N-linked (GlcNAc...) asparagine glycan.

It belongs to the small leucine-rich proteoglycan (SLRP) family. SLRP class IV subfamily. As to expression, expressed in kidney and retina. Also at low levels in brain, testis and muscle. Within the retina, expressed in the inner segment of photoreceptors, outer and inner nuclear layers and the ganglion cell layer.

It is found in the secreted. The protein localises to the extracellular space. The protein resides in the extracellular matrix. The chain is Nyctalopin (NYX) from Homo sapiens (Human).